Here is a 458-residue protein sequence, read N- to C-terminus: RuvB-like helicase 1 (458 aa).

Position 71 to 78 (71 to 78 (GGPGTGKT)) interacts with ATP.

It belongs to the RuvB family. In terms of assembly, may form heterododecamers with RVB2. Component of the SWR1 chromatin remodeling complex, the INO80 chromatin remodeling complex, and of the R2TP complex.

It is found in the nucleus. It carries out the reaction ATP + H2O = ADP + phosphate + H(+). DNA helicase which participates in several chromatin remodeling complexes, including the SWR1 and the INO80 complexes. The SWR1 complex mediates the ATP-dependent exchange of histone H2A for the H2A variant HZT1 leading to transcriptional regulation of selected genes by chromatin remodeling. The INO80 complex remodels chromatin by shifting nucleosomes and is involved in DNA repair. Also involved in pre-rRNA processing. The protein is RuvB-like helicase 1 (RVB1) of Gibberella zeae (strain ATCC MYA-4620 / CBS 123657 / FGSC 9075 / NRRL 31084 / PH-1) (Wheat head blight fungus).